A 263-amino-acid chain; its full sequence is Regulatory protein RecX (263 aa).

Belongs to the RecX family.

Its subcellular location is the cytoplasm. Its function is as follows. Modulates RecA activity. In Bacillus pumilus (strain SAFR-032), this protein is Regulatory protein RecX.